The chain runs to 141 residues: MRHKKSGRKFNRSASHRKAMLRNMVRSLLTYEHIRTTEPKAKELRSSCEKLITLALRNDLHSRRLAYKTLENHGLVKRLFDEIGPRYEGGGGGYTRIIKLAEPRKGDCAPMCIIELTKRAEAPAEEAAATTEAPAEEAQEA.

It belongs to the bacterial ribosomal protein bL17 family. As to quaternary structure, part of the 50S ribosomal subunit. Contacts protein L32.

In Maridesulfovibrio salexigens (strain ATCC 14822 / DSM 2638 / NCIMB 8403 / VKM B-1763) (Desulfovibrio salexigens), this protein is Large ribosomal subunit protein bL17.